Consider the following 435-residue polypeptide: ATP-dependent RNA helicase RhlB (435 aa).

The short motif at 9–37 (QKFADLGLNPQVVEGLEKKGFEFCTPIQA) is the Q motif element. In terms of domain architecture, Helicase ATP-binding spans 40-219 (LPVLLSGQDI…FEHMHNPEHV (180 aa)). Residue 53-60 (AQTGTGKT) participates in ATP binding. Positions 165–168 (DEAD) match the DEAD box motif. Positions 245–390 (ALLQTLIEEE…VSDYDSSALI (146 aa)) constitute a Helicase C-terminal domain. Residues 395–435 (APVRTPSARNQQRRTNTGGARSGDRKSNNRRPRQPRQHKEA) are disordered. Over residues 401 to 413 (SARNQQRRTNTGG) the composition is skewed to polar residues. Over residues 422–435 (NNRRPRQPRQHKEA) the composition is skewed to basic residues.

This sequence belongs to the DEAD box helicase family. RhlB subfamily. Component of the RNA degradosome, which is a multiprotein complex involved in RNA processing and mRNA degradation.

The protein resides in the cytoplasm. It catalyses the reaction ATP + H2O = ADP + phosphate + H(+). In terms of biological role, DEAD-box RNA helicase involved in RNA degradation. Has RNA-dependent ATPase activity and unwinds double-stranded RNA. The protein is ATP-dependent RNA helicase RhlB of Vibrio vulnificus (strain CMCP6).